The chain runs to 393 residues: 1-deoxy-D-xylulose 5-phosphate reductoisomerase (393 aa).

8 residues coordinate NADPH: T16, G17, S18, I19, A42, R43, N44, and N127. K128 is a 1-deoxy-D-xylulose 5-phosphate binding site. E129 serves as a coordination point for NADPH. Position 153 (D153) interacts with Mn(2+). 1-deoxy-D-xylulose 5-phosphate contacts are provided by S154, E155, S179, and H202. E155 lines the Mn(2+) pocket. Position 208 (G208) interacts with NADPH. 1-deoxy-D-xylulose 5-phosphate contacts are provided by S215, N220, K221, and E224. E224 is a binding site for Mn(2+).

It belongs to the DXR family. The cofactor is Mg(2+). Mn(2+) serves as cofactor.

The catalysed reaction is 2-C-methyl-D-erythritol 4-phosphate + NADP(+) = 1-deoxy-D-xylulose 5-phosphate + NADPH + H(+). The protein operates within isoprenoid biosynthesis; isopentenyl diphosphate biosynthesis via DXP pathway; isopentenyl diphosphate from 1-deoxy-D-xylulose 5-phosphate: step 1/6. In terms of biological role, catalyzes the NADPH-dependent rearrangement and reduction of 1-deoxy-D-xylulose-5-phosphate (DXP) to 2-C-methyl-D-erythritol 4-phosphate (MEP). This is 1-deoxy-D-xylulose 5-phosphate reductoisomerase from Jannaschia sp. (strain CCS1).